A 493-amino-acid chain; its full sequence is Alpha-amylase-related protein (493 aa).

The N-terminal stretch at M1–A19 is a signal peptide. Position 20 is a pyrrolidone carboxylic acid (Q20). C47 and C103 form a disulfide bridge. Ca(2+)-binding residues include N117, Q168, and D177. A disulfide bond links C156 and C170. Residue R205 participates in chloride binding. The active-site Nucleophile is the D207. H211 contributes to the Ca(2+) binding site. E244 functions as the Proton donor in the catalytic mechanism. Residues N307 and R342 each contribute to the chloride site. Disulfide bonds link C375–C381, C417–C440, and C447–C459.

Belongs to the glycosyl hydrolase 13 family. In terms of assembly, monomer. Ca(2+) is required as a cofactor. It depends on chloride as a cofactor.

It localises to the secreted. It catalyses the reaction Endohydrolysis of (1-&gt;4)-alpha-D-glucosidic linkages in polysaccharides containing three or more (1-&gt;4)-alpha-linked D-glucose units.. The chain is Alpha-amylase-related protein (Amyrel) from Drosophila yakuba (Fruit fly).